The primary structure comprises 475 residues: MSAFQNGGIASRALDDDSDIEEEALANDYKEQVQYEGMEELEQVNSMSMAQQTDDIQSRLAAAAQPLDFSAPLEVKFASYDNYCSLFHFILNSDGPVDLEPPSYYWAWDVIDEFIYQFNSFCSYRNRVARQGTNEEEIQILREAPNTWGCYSVLNVLYSLIQRSQINEQLAAMKRNEEPMAVAGDYGSKSLYRMLGYFSIIGLLRVHCLLGDFSLALKTLDDIELNKKAMFARVMAAHFTTYYYVGFSYMMMRRYADAIRMFSHILIYVSRTKNFQKNAQYDSISKKNDQMYALIAICVAFHPTRLDDTIHTALREKYGDQLLKLQRGGPESLPIFEELFRSACPKFISPTPPDFDNPELNVDPLEHHLSIFMDEVKTNMWSPTVKSYLRLYTTMDVKKLAGFLEVEPEKLRGWLLVNKQRSRQIRWTDNGLLDGEVVNSNDLDYAMQGDLIHISEAKVGRKLVDWYLRNLARTY.

Positions 257–451 (DAIRMFSHIL…DLDYAMQGDL (195 aa)) constitute a PCI domain.

The protein belongs to the eIF-3 subunit L family. In terms of assembly, component of the eukaryotic translation initiation factor 3 (eIF-3) complex.

The protein localises to the cytoplasm. Functionally, component of the eukaryotic translation initiation factor 3 (eIF-3) complex, which is involved in protein synthesis of a specialized repertoire of mRNAs and, together with other initiation factors, stimulates binding of mRNA and methionyl-tRNAi to the 40S ribosome. The eIF-3 complex specifically targets and initiates translation of a subset of mRNAs involved in cell proliferation. This Botryotinia fuckeliana (strain B05.10) (Noble rot fungus) protein is Eukaryotic translation initiation factor 3 subunit L.